The following is a 361-amino-acid chain: Chorismate synthase (361 aa).

2 residues coordinate NADP(+): Arg-48 and Arg-54. FMN-binding positions include 125–127 (RSS), 238–239 (NA), Gly-278, 293–297 (KPTSS), and Arg-319.

It belongs to the chorismate synthase family. In terms of assembly, homotetramer. FMNH2 serves as cofactor.

The catalysed reaction is 5-O-(1-carboxyvinyl)-3-phosphoshikimate = chorismate + phosphate. Its pathway is metabolic intermediate biosynthesis; chorismate biosynthesis; chorismate from D-erythrose 4-phosphate and phosphoenolpyruvate: step 7/7. In terms of biological role, catalyzes the anti-1,4-elimination of the C-3 phosphate and the C-6 proR hydrogen from 5-enolpyruvylshikimate-3-phosphate (EPSP) to yield chorismate, which is the branch point compound that serves as the starting substrate for the three terminal pathways of aromatic amino acid biosynthesis. This reaction introduces a second double bond into the aromatic ring system. This chain is Chorismate synthase, found in Sodalis glossinidius (strain morsitans).